Here is a 335-residue protein sequence, read N- to C-terminus: MLP-like protein 28 (335 aa).

It belongs to the MLP family.

Its function is as follows. Can bind steroids (in vitro), and may also bind other types of hydrophobic ligands. This Arabidopsis thaliana (Mouse-ear cress) protein is MLP-like protein 28 (MLP28).